Reading from the N-terminus, the 124-residue chain is Small ribosomal subunit protein uS12 (124 aa).

Residue Asp-89 is modified to 3-methylthioaspartic acid.

It belongs to the universal ribosomal protein uS12 family. Part of the 30S ribosomal subunit. Contacts proteins S8 and S17. May interact with IF1 in the 30S initiation complex.

With S4 and S5 plays an important role in translational accuracy. Functionally, interacts with and stabilizes bases of the 16S rRNA that are involved in tRNA selection in the A site and with the mRNA backbone. Located at the interface of the 30S and 50S subunits, it traverses the body of the 30S subunit contacting proteins on the other side and probably holding the rRNA structure together. The combined cluster of proteins S8, S12 and S17 appears to hold together the shoulder and platform of the 30S subunit. The chain is Small ribosomal subunit protein uS12 from Shewanella putrefaciens (strain CN-32 / ATCC BAA-453).